Reading from the N-terminus, the 608-residue chain is Albumin (608 aa).

Residues 1–18 (MKWVTFLLLLFVSGSAFS) form the signal peptide. Positions 19–24 (RGVFRR) are excised as a propeptide. Albumin domains lie at 19–211 (RGVF…GVKE), 212–403 (KALV…EFQP), and 404–601 (LVEE…NLVT). Cu cation is bound at residue His-27. Ser-29 bears the Phosphoserine mark. Ca(2+)-binding residues include Glu-30 and Asp-37. Residues Cys-77 and Cys-86 are joined by a disulfide bond. A phosphoserine mark is found at Ser-82 and Ser-89. Position 91 (His-91) interacts with Zn(2+). Disulfide bonds link Cys-99–Cys-115, Cys-114–Cys-125, Cys-148–Cys-193, Cys-192–Cys-201, Cys-224–Cys-270, and Cys-269–Cys-277. Lys-229 is modified (N6-succinyllysine). Position 268 (Glu-268) interacts with Ca(2+). 2 residues coordinate Zn(2+): His-271 and Asp-273. Positions 273, 276, and 279 each coordinate Ca(2+). Intrachain disulfides connect Cys-289–Cys-303, Cys-302–Cys-313, Cys-340–Cys-385, Cys-384–Cys-393, Cys-416–Cys-462, Cys-461–Cys-472, Cys-485–Cys-501, and Cys-500–Cys-511. Ser-297 is subject to Phosphoserine. Ser-443 carries the phosphoserine modification. A phosphothreonine mark is found at Thr-444 and Thr-446. Lys-460 is subject to N6-succinyllysine. Ser-513 bears the Phosphoserine mark. 2 disulfide bridges follow: Cys-538-Cys-583 and Cys-582-Cys-591. Lys-543 is subject to N6-succinyllysine. Lys-558 carries the post-translational modification N6-methyllysine. Position 570 is a phosphothreonine (Thr-570). Residue Lys-588 is modified to N6-succinyllysine.

It belongs to the ALB/AFP/VDB family. Part of a complex composed of complement component C3, CLCA1/CLCA3, A2ML1/OH and ALB/serum albumin. Interacts with FCGRT; this interaction regulates ALB homeostasis. Interacts with TASOR. In plasma, occurs in a covalently-linked complex with chromophore-bound alpha-1-microglobulin; this interaction does not prevent fatty acid binding to ALB. Phosphorylated by FAM20C in the extracellular medium. Plasma. Expressed in the granular cells within the cerebellum.

The protein resides in the secreted. Functionally, binds water, Ca(2+), Na(+), K(+), fatty acids, hormones, bilirubin and drugs. Its main function is the regulation of the colloidal osmotic pressure of blood. Major zinc transporter in plasma, typically binds about 80% of all plasma zinc. Major calcium and magnesium transporter in plasma, binds approximately 45% of circulating calcium and magnesium in plasma. Potentially has more than two calcium-binding sites and might additionally bind calcium in a non-specific manner. The shared binding site between zinc and calcium at residue Asp-273 suggests a crosstalk between zinc and calcium transport in the blood. The rank order of affinity is zinc &gt; calcium &gt; magnesium. Binds to the bacterial siderophore enterobactin and inhibits enterobactin-mediated iron uptake of E.coli from ferric transferrin, and may thereby limit the utilization of iron and growth of enteric bacteria such as E.coli. Does not prevent iron uptake by the bacterial siderophore aerobactin. The polypeptide is Albumin (Alb) (Mus musculus (Mouse)).